Here is a 171-residue protein sequence, read N- to C-terminus: MTLLSSTELRKLIQATPSLLENAIDIETQIQPNGLELTLKEVKTIDGSGAVDFDNSERQLPDGKTLEFGNDGWIHLPKGIYKVLFNEIVNIPMNLAAIAKPRSTLIRCGTTLETAVWDAGYRGRSESMLVVYNTEGFRLKKDARIMQLLFYTLGAEVEKGYSGIYQNENTK.

The protein belongs to the dCTP deaminase family. Archaeal dUTPase subfamily.

The catalysed reaction is dUTP + H2O = dUMP + diphosphate + H(+). Its pathway is pyrimidine metabolism; dUMP biosynthesis; dUMP from dCTP (dUTP route): step 2/2. Its function is as follows. This enzyme is involved in nucleotide metabolism: it produces dUMP, the immediate precursor of thymidine nucleotides and it decreases the intracellular concentration of dUTP so that uracil cannot be incorporated into DNA. This Methanosarcina barkeri (strain Fusaro / DSM 804) protein is Probable deoxyuridine 5'-triphosphate nucleotidohydrolase.